The primary structure comprises 219 residues: uncharacterized protein (219 aa).

Residues 13–32 form a helical membrane-spanning segment; sequence VFGLFLFSLIFFGLLSLATF.

It localises to the membrane. This is an uncharacterized protein from Aquifex aeolicus (strain VF5).